We begin with the raw amino-acid sequence, 225 residues long: Methylthioribulose-1-phosphate dehydratase (225 aa).

His-106 and His-108 together coordinate Zn(2+).

This sequence belongs to the aldolase class II family. MtnB subfamily. Zn(2+) is required as a cofactor.

It catalyses the reaction 5-(methylsulfanyl)-D-ribulose 1-phosphate = 5-methylsulfanyl-2,3-dioxopentyl phosphate + H2O. It functions in the pathway amino-acid biosynthesis; L-methionine biosynthesis via salvage pathway; L-methionine from S-methyl-5-thio-alpha-D-ribose 1-phosphate: step 2/6. Functionally, catalyzes the dehydration of methylthioribulose-1-phosphate (MTRu-1-P) into 2,3-diketo-5-methylthiopentyl-1-phosphate (DK-MTP-1-P). This is Methylthioribulose-1-phosphate dehydratase from Xanthomonas oryzae pv. oryzae (strain MAFF 311018).